We begin with the raw amino-acid sequence, 138 residues long: MSNGRILHTMLRVGDLDKSIKFYTEVMGMQLLRTNENKEYEYTLAFVGYGDESQGAVIELTYNWGKTEYDLGTAFGHIAIGVDDIYATCDAIKAAGGNVTREAGPVKGGTTHIAFVKDPDGYMIELIQNKQASAGLEG.

The 125-residue stretch at 5–129 (RILHTMLRVG…DGYMIELIQN (125 aa)) folds into the VOC domain. His8 provides a ligand contact to Ni(2+). Residue Arg12 participates in substrate binding. Glu59 is a binding site for Ni(2+). Asn63 and His77 together coordinate substrate. 2 residues coordinate Ni(2+): His77 and Glu125. Glu125 serves as the catalytic Proton donor/acceptor.

The protein belongs to the glyoxalase I family. Ni(2+) is required as a cofactor.

The enzyme catalyses (R)-S-lactoylglutathione = methylglyoxal + glutathione. Its pathway is secondary metabolite metabolism; methylglyoxal degradation; (R)-lactate from methylglyoxal: step 1/2. Functionally, catalyzes the conversion of hemimercaptal, formed from methylglyoxal and glutathione, to S-lactoylglutathione. The protein is Probable lactoylglutathione lyase (gloA) of Vibrio parahaemolyticus serotype O3:K6 (strain RIMD 2210633).